Reading from the N-terminus, the 429-residue chain is Zinc finger protein 385C (429 aa).

Residues 77 to 107 (ISCNICHLRFNSANQAEAHYKGHRHARKLKA) form a Matrin-type 1 zinc finger. Disordered regions lie at residues 109–224 (EAAK…GRGE), 258–295 (GHQG…GPSP), and 311–340 (QLKQ…NKLQ). The segment covering 125–146 (TVVSSASPPASGSPGTPQSKGP) has biased composition (low complexity). Positions 147-162 (ASPPLGPSLQLPPTPD) are enriched in pro residues. Positions 181 to 193 (CDAAASSSSSSCP) are enriched in low complexity. A Matrin-type 2 zinc finger spans residues 225–259 (KGRLYCPTCKVTVNSASQLQAHNTGAKHRWMVEGH). Over residues 262–284 (APRRGRGRPVSRGGTGHKTKRVI) the composition is skewed to basic residues. The Matrin-type 3 zinc finger occupies 297–327 (FHCALCQLHVNSETQLKQHMSSRRHKDRLAG).

It localises to the nucleus. This chain is Zinc finger protein 385C, found in Mus musculus (Mouse).